The primary structure comprises 101 residues: Ferredoxin-3 (101 aa).

4Fe-4S ferredoxin-type domains are found at residues 17 to 46 (YLMK…LHGL) and 70 to 100 (KVMA…HAAL). The [4Fe-4S] cluster site is built by Cys26, Cys29, Cys32, Cys36, Cys80, Cys83, Cys86, and Cys90.

In terms of assembly, homodimer. It depends on [4Fe-4S] cluster as a cofactor.

Functionally, ferredoxins are iron-sulfur proteins that transfer electrons in a wide variety of metabolic reactions. This is Ferredoxin-3 (fdxB) from Rhodobacter capsulatus (Rhodopseudomonas capsulata).